Here is a 158-residue protein sequence, read N- to C-terminus: D-aminoacyl-tRNA deacylase (158 aa).

Positions 143 to 144 (GP) match the Gly-cisPro motif, important for rejection of L-amino acids motif.

This sequence belongs to the DTD family. In terms of assembly, homodimer.

Its subcellular location is the cytoplasm. The enzyme catalyses glycyl-tRNA(Ala) + H2O = tRNA(Ala) + glycine + H(+). The catalysed reaction is a D-aminoacyl-tRNA + H2O = a tRNA + a D-alpha-amino acid + H(+). Functionally, an aminoacyl-tRNA editing enzyme that deacylates mischarged D-aminoacyl-tRNAs. Also deacylates mischarged glycyl-tRNA(Ala), protecting cells against glycine mischarging by AlaRS. Acts via tRNA-based rather than protein-based catalysis; rejects L-amino acids rather than detecting D-amino acids in the active site. By recycling D-aminoacyl-tRNA to D-amino acids and free tRNA molecules, this enzyme counteracts the toxicity associated with the formation of D-aminoacyl-tRNA entities in vivo and helps enforce protein L-homochirality. This chain is D-aminoacyl-tRNA deacylase, found in Solidesulfovibrio magneticus (strain ATCC 700980 / DSM 13731 / RS-1) (Desulfovibrio magneticus).